The chain runs to 518 residues: DNA-binding protein Ikaros (518 aa).

A disordered region spans residues 1-51 (METDEAQDMSQVSGKESPPISDVPDDADEPMPVPEDLSTTTGGQQSVKNER). A compositionally biased stretch (polar residues) spans 37 to 47 (LSTTTGGQQSV). C2H2-type zinc fingers lie at residues 117–139 (LKCDICGIICIGPNVLMVHNRSH), 145–167 (FQCNQCGASFTQKGNLLRHIKLH), 173–195 (FKCHLCNYACRRRDALTGHLRTH), and 201–224 (HKCGYCGRSYKQRSSLEEHKERCH). Positions 381–405 (SVSSERDASPSNSCQDSTDTESNNE) are disordered. C2H2-type zinc fingers lie at residues 461 to 483 (YKCEHCRVLFLDHVMYTIHMGCH) and 489 to 513 (FECNMCGYHSQDRYEFSSHITRGEH).

This sequence belongs to the Ikaros C2H2-type zinc-finger protein family. As to expression, expressed in embryonic hematopoietic organs such as the bursa of Fabricius, thymus and spleen. In the adult, expressed in spleen, thymus, bursa and peripheral blood leukocytes.

It localises to the nucleus. Binds and activates the enhancer (delta-A element) of the CD3-delta gene. Functions in the specification and the maturation of the T-lymphocyte. Also interacts with a critical control element in the TDT (terminal deoxynucleotidyltransferase) promoter as well as with the promoters for other genes expressed during early stages of B- and T-cell development. Function is isoform-specific and is modulated by dominant-negative inactive isoforms. This is DNA-binding protein Ikaros (IKZF1) from Gallus gallus (Chicken).